The chain runs to 351 residues: MPSLRAHVFRVPADGPDDVAGVEALFASGLQANNIVAVLGKTEGNGCVNDFTRGYATRSFETLFSRYGVDGVSIIMSGGTEGALSPHWTVFARETVETPGERALAIGVSRTPALSPEHLGRREQILLVAEGVKSAMRDAGIDDPADAHFVQIKCPLLTSRRIAEAEAAGRTVATHDTLKSMGLSRGASALGVAVALGEIDATSINDADICTRFDLFSRCASTSSGVELTDHEIIVLGMSAKWSGPLSIDHAVMRDAIDAHSVRKARERLPENSRLAAVLAKAEPDPSGEIDGRRHTMLDDSDIAGTRHARAFVGGVLAGIFGITDLYVSGGAEHQGPPGGGPVAIIVEKEQ.

Residues 1–96 (MPSLRAHVFR…HWTVFARETV (96 aa)) are RU A. Substrate-binding positions include arginine 53 and 77 to 78 (SG). The RU B stretch occupies residues 103-240 (ALAIGVSRTP…HEIIVLGMSA (138 aa)). Residue lysine 153 is part of the active site. Residues arginine 185 and 223–224 (SS) each bind substrate. Serine 223 serves as the catalytic Nucleophile. Residues 246-351 (LSIDHAVMRD…PVAIIVEKEQ (106 aa)) form an RU C region. Glutamate 283 contributes to the Mg(2+) binding site. Substrate is bound by residues arginine 310 and 329–330 (SG). The Mg(2+) site is built by alanine 332, glutamine 335, glycine 336, proline 337, and glycine 340.

The protein belongs to the cyclic amide hydrolase (CyAH) family. As to quaternary structure, homotetramer.

It carries out the reaction cyanurate + H2O = 1-carboxybiuret + H(+). It participates in xenobiotic degradation; atrazine degradation; biuret from cyanurate: step 1/1. Its activity is regulated as follows. Inhibited by barbituric acid. Responsible for the hydrolysis of cyanuric acid, an intermediate formed during catabolism of s-triazine based compounds in herbicides such as atrazine and polymers such as melamine. Catalyzes the hydrolytic opening of the s-triazine ring of cyanuric acid (2,4,6-trihydroxy-s-triazine) to yield carbon dioxide and carboxybiuret, which spontaneously decarboxylates to biuret. This chain is Cyanuric acid amidohydrolase, found in Rhizobium johnstonii (strain DSM 114642 / LMG 32736 / 3841) (Rhizobium leguminosarum bv. viciae).